The chain runs to 502 residues: Probable glycine dehydrogenase (decarboxylating) subunit 2 (502 aa).

K273 is modified (N6-(pyridoxal phosphate)lysine).

It belongs to the GcvP family. C-terminal subunit subfamily. As to quaternary structure, the glycine cleavage system is composed of four proteins: P, T, L and H. In this organism, the P 'protein' is a heterodimer of two subunits. Pyridoxal 5'-phosphate serves as cofactor.

It carries out the reaction N(6)-[(R)-lipoyl]-L-lysyl-[glycine-cleavage complex H protein] + glycine + H(+) = N(6)-[(R)-S(8)-aminomethyldihydrolipoyl]-L-lysyl-[glycine-cleavage complex H protein] + CO2. In terms of biological role, the glycine cleavage system catalyzes the degradation of glycine. The P protein binds the alpha-amino group of glycine through its pyridoxal phosphate cofactor; CO(2) is released and the remaining methylamine moiety is then transferred to the lipoamide cofactor of the H protein. The chain is Probable glycine dehydrogenase (decarboxylating) subunit 2 from Staphylococcus epidermidis (strain ATCC 35984 / DSM 28319 / BCRC 17069 / CCUG 31568 / BM 3577 / RP62A).